A 346-amino-acid chain; its full sequence is 3 beta-hydroxysteroid dehydrogenase/Delta 5--&gt;4-isomerase (346 aa).

The active-site Proton acceptor is the tyrosine 147. Lysine 151 contacts NAD(+).

The protein belongs to the 3-beta-HSD family.

It carries out the reaction a 3beta-hydroxy-Delta(5)-steroid + NAD(+) = a 3-oxo-Delta(5)-steroid + NADH + H(+). The catalysed reaction is a 3-oxo-Delta(5)-steroid = a 3-oxo-Delta(4)-steroid. It participates in lipid metabolism; steroid biosynthesis. Catalyzes the oxidative conversion of Delta(5)-ene-3-beta-hydroxy steroid, and the oxidative conversion of ketosteroids. The 3-beta-HSD enzymatic system plays a crucial role in the biosynthesis of all classes of hormonal steroids. During viral infection, steroid production contributes to virulence by inhibiting the host inflammatory response. The protein is 3 beta-hydroxysteroid dehydrogenase/Delta 5--&gt;4-isomerase (OPG174) of Homo sapiens (Human).